The chain runs to 171 residues: UPF0398 protein Sez_1569 (171 aa).

This sequence belongs to the UPF0398 family.

In Streptococcus equi subsp. zooepidemicus (strain MGCS10565), this protein is UPF0398 protein Sez_1569.